A 39-amino-acid chain; its full sequence is Photosystem II reaction center protein J (39 aa).

A helical transmembrane segment spans residues 9 to 29 (LWLVGLVGGFAVITIVSLFIY).

Belongs to the PsbJ family. As to quaternary structure, PSII is composed of 1 copy each of membrane proteins PsbA, PsbB, PsbC, PsbD, PsbE, PsbF, PsbH, PsbI, PsbJ, PsbK, PsbL, PsbM, PsbT, PsbX, PsbY, PsbZ, Psb30/Ycf12, at least 3 peripheral proteins of the oxygen-evolving complex and a large number of cofactors. It forms dimeric complexes.

The protein resides in the plastid. It localises to the chloroplast thylakoid membrane. Functionally, one of the components of the core complex of photosystem II (PSII). PSII is a light-driven water:plastoquinone oxidoreductase that uses light energy to abstract electrons from H(2)O, generating O(2) and a proton gradient subsequently used for ATP formation. It consists of a core antenna complex that captures photons, and an electron transfer chain that converts photonic excitation into a charge separation. The protein is Photosystem II reaction center protein J of Thalassiosira pseudonana (Marine diatom).